Consider the following 546-residue polypeptide: RuBisCO large subunit-binding protein subunit alpha, chloroplastic (546 aa).

Residues Arg1–Ala6 constitute a chloroplast transit peptide. Ser50 is modified (phosphoserine).

It belongs to the chaperonin (HSP60) family. In terms of assembly, oligomer of probably six alpha and six beta subunits.

It localises to the plastid. The protein localises to the chloroplast. This protein binds RuBisCO small and large subunits and is implicated in the assembly of the enzyme oligomer. This Brassica napus (Rape) protein is RuBisCO large subunit-binding protein subunit alpha, chloroplastic.